A 303-amino-acid chain; its full sequence is Protease HtpX homolog (303 aa).

2 helical membrane-spanning segments follow: residues 19-39 (IIIF…VSYF) and 41-61 (LGEF…YYAY). Residue His146 coordinates Zn(2+). Glu147 is a catalytic residue. Residue His150 coordinates Zn(2+). 2 helical membrane-spanning segments follow: residues 156–176 (VRLQ…GDSL) and 192–212 (NILG…ATLL). Residue Glu221 coordinates Zn(2+).

This sequence belongs to the peptidase M48B family. The cofactor is Zn(2+).

It is found in the cell inner membrane. This chain is Protease HtpX homolog, found in Dictyoglomus thermophilum (strain ATCC 35947 / DSM 3960 / H-6-12).